Consider the following 101-residue polypeptide: MSEQTPRDDGEIFTLVDEAGNEELYKEAMRFQSPETGKWYICLYPLDEENDEEVGIQAFAFEEPTSEEDELELLPIENDAEWEMVQEVLNTFIDDDGNFNA.

The protein belongs to the UPF0473 family.

This is UPF0473 protein LAF_0524 from Limosilactobacillus fermentum (strain NBRC 3956 / LMG 18251) (Lactobacillus fermentum).